A 315-amino-acid polypeptide reads, in one-letter code: tRNA dimethylallyltransferase (315 aa).

10–17 (GPTATGKS) is an ATP binding site. 12–17 (TATGKS) lines the substrate pocket. Positions 35–38 (DSMQ) are interaction with substrate tRNA.

Belongs to the IPP transferase family. As to quaternary structure, monomer. It depends on Mg(2+) as a cofactor.

It catalyses the reaction adenosine(37) in tRNA + dimethylallyl diphosphate = N(6)-dimethylallyladenosine(37) in tRNA + diphosphate. In terms of biological role, catalyzes the transfer of a dimethylallyl group onto the adenine at position 37 in tRNAs that read codons beginning with uridine, leading to the formation of N6-(dimethylallyl)adenosine (i(6)A). The protein is tRNA dimethylallyltransferase of Caldanaerobacter subterraneus subsp. tengcongensis (strain DSM 15242 / JCM 11007 / NBRC 100824 / MB4) (Thermoanaerobacter tengcongensis).